The sequence spans 156 residues: Persephin (156 aa).

An N-terminal signal peptide occupies residues 1–21 (MAAGRLRILCLLLLSLHPSLG). Cystine bridges form between Cys-66–Cys-124, Cys-93–Cys-152, and Cys-97–Cys-154.

Belongs to the TGF-beta family. GDNF subfamily. In terms of assembly, homodimer; disulfide-linked. Interacts with GFRA4 coreceptor and RET: forms a 2:2:2 ternary complex composed of PSPN ligand, GFRA4 and RET receptor.

The protein resides in the secreted. Its function is as follows. Growth factor that exhibits neurotrophic activity on mesencephalic dopaminergic and motor neurons. Acts by binding to its coreceptor, GFRA4, leading to autophosphorylation and activation of the RET receptor. The chain is Persephin from Mus musculus (Mouse).